The chain runs to 75 residues: Sec-independent protein translocase protein TatA (75 aa).

The chain crosses the membrane as a helical span at residues 1-21 (MGSFSIWHWLIVLVIIALVFG). The tract at residues 45 to 75 (DASADKPADQVTQQRVSDDTIDVQAKEKSNS) is disordered.

It belongs to the TatA/E family. As to quaternary structure, the Tat system comprises two distinct complexes: a TatABC complex, containing multiple copies of TatA, TatB and TatC subunits, and a separate TatA complex, containing only TatA subunits. Substrates initially bind to the TatABC complex, which probably triggers association of the separate TatA complex to form the active translocon.

Its subcellular location is the cell inner membrane. In terms of biological role, part of the twin-arginine translocation (Tat) system that transports large folded proteins containing a characteristic twin-arginine motif in their signal peptide across membranes. TatA could form the protein-conducting channel of the Tat system. This chain is Sec-independent protein translocase protein TatA, found in Bordetella bronchiseptica (strain ATCC BAA-588 / NCTC 13252 / RB50) (Alcaligenes bronchisepticus).